The following is a 320-amino-acid chain: Malate dehydrogenase (320 aa).

NAD(+) is bound by residues 10 to 15 (GAGQIG) and Asp34. Substrate is bound by residues Arg83 and Arg89. NAD(+) is bound by residues Asn96 and 119–121 (ITN). Substrate-binding residues include Asn121 and Arg152. Residue His176 is the Proton acceptor of the active site.

The protein belongs to the LDH/MDH superfamily. MDH type 3 family.

The catalysed reaction is (S)-malate + NAD(+) = oxaloacetate + NADH + H(+). Functionally, catalyzes the reversible oxidation of malate to oxaloacetate. This is Malate dehydrogenase from Methylobacterium radiotolerans (strain ATCC 27329 / DSM 1819 / JCM 2831 / NBRC 15690 / NCIMB 10815 / 0-1).